We begin with the raw amino-acid sequence, 381 residues long: Protein pelota homolog (381 aa).

Belongs to the eukaryotic release factor 1 family. Pelota subfamily. In terms of assembly, component of the Pelota-HBS1L complex, also named Dom34-Hbs1 complex, composed of pelo-1 and hbs-1. It depends on a divalent metal cation as a cofactor.

The protein localises to the cytoplasm. It localises to the nucleus. Its function is as follows. Component of the Pelota-HBS1L complex, a complex that recognizes stalled ribosomes and triggers the No-Go Decay (NGD) pathway. In the Pelota-HBS1L complex, pelo-1 recognizes ribosomes stalled at the 3' end of an mRNA and engages stalled ribosomes by destabilizing mRNA in the mRNA channel. Following ribosome-binding, the Pelota-HBS1L complex promotes the disassembly of stalled ribosomes, followed by degradation of damaged mRNAs as part of the NGD pathway. In Caenorhabditis elegans, this protein is Protein pelota homolog.